The chain runs to 259 residues: Thiazole synthase (259 aa).

Lysine 100 functions as the Schiff-base intermediate with DXP in the catalytic mechanism. 1-deoxy-D-xylulose 5-phosphate is bound by residues glycine 161, alanine 187–glycine 188, and asparagine 209–threonine 210.

It belongs to the ThiG family. In terms of assembly, homotetramer. Forms heterodimers with either ThiH or ThiS.

It is found in the cytoplasm. It catalyses the reaction [ThiS sulfur-carrier protein]-C-terminal-Gly-aminoethanethioate + 2-iminoacetate + 1-deoxy-D-xylulose 5-phosphate = [ThiS sulfur-carrier protein]-C-terminal Gly-Gly + 2-[(2R,5Z)-2-carboxy-4-methylthiazol-5(2H)-ylidene]ethyl phosphate + 2 H2O + H(+). It participates in cofactor biosynthesis; thiamine diphosphate biosynthesis. Catalyzes the rearrangement of 1-deoxy-D-xylulose 5-phosphate (DXP) to produce the thiazole phosphate moiety of thiamine. Sulfur is provided by the thiocarboxylate moiety of the carrier protein ThiS. In vitro, sulfur can be provided by H(2)S. This chain is Thiazole synthase, found in Halalkalibacterium halodurans (strain ATCC BAA-125 / DSM 18197 / FERM 7344 / JCM 9153 / C-125) (Bacillus halodurans).